The chain runs to 470 residues: Putative multidrug resistance protein MdtD (470 aa).

Residues 1 to 11 (MTELPDNTRWQ) are Periplasmic-facing. Residues 12 to 32 (LWIVALGFFMQSLDTTIVNTA) form a helical membrane-spanning segment. Residues 33 to 48 (LPSMAKSLGESPLHMH) lie on the Cytoplasmic side of the membrane. A helical membrane pass occupies residues 49–69 (MVVVSYVLTVAVMLPASGWLA). Over 70–76 (DKIGVRN) the chain is Periplasmic. A helical transmembrane segment spans residues 77 to 97 (IFFAAIVLFTLGSLFCALSGT). At 98–101 (LNQL) the chain is on the cytoplasmic side. The helical transmembrane segment at 102–124 (VLARVLQGVGGAMMVPVGRLTVM) threads the bilayer. At 125–137 (KIVPRAQYMAAMT) the chain is on the periplasmic side. The helical transmembrane segment at 138-158 (FVTLPGQIGPLLGPALGGVLV) threads the bilayer. The Cytoplasmic portion of the chain corresponds to 159–164 (EYASWH). The chain crosses the membrane as a helical span at residues 165–185 (WIFLINIPVGIVGAMATFMLM). The Periplasmic portion of the chain corresponds to 186-196 (PNYTIETRRFD). A helical transmembrane segment spans residues 197–217 (LPGFLLLAIGMAVLTLALDGS). At 218 to 221 (KSMG) the chain is on the cytoplasmic side. The chain crosses the membrane as a helical span at residues 222–242 (ISPWTLAGLAAGGAAAILLYL). At 243–262 (LHAKKNSGALFSLRLFRTPT) the chain is on the periplasmic side. A helical membrane pass occupies residues 263 to 283 (FSLGLLGSFAGRIGSGMLPFM). Over 284 to 285 (TP) the chain is Cytoplasmic. Residues 286-306 (VFLQIGLGFSPFHAGLMMIPM) form a helical membrane-spanning segment. Over 307-341 (VLGSMGMKRIVVQIVNRFGYRRVLVATTLGLALVS) the chain is Periplasmic. Residues 342–362 (LLFMSVALLGWYYLLPLVLLL) form a helical membrane-spanning segment. The Cytoplasmic portion of the chain corresponds to 363–395 (QGMVNSARFSSMNTLTLKDLPDTLASSGNSLLS). Residues 396-416 (MIMQLSMSIGVTIAGMLLGMF) form a helical membrane-spanning segment. Over 417–430 (GQQHIGIDSSATHH) the chain is Periplasmic. The helical transmembrane segment at 431–451 (VFMYTWLCMAVIIALPAIIFA) threads the bilayer. Topologically, residues 452–470 (RVPNDTQQNMVISRRKRSL) are cytoplasmic.

It belongs to the major facilitator superfamily. TCR/Tet family.

Its subcellular location is the cell inner membrane. The protein is Putative multidrug resistance protein MdtD of Salmonella heidelberg (strain SL476).